The sequence spans 213 residues: NADH-quinone oxidoreductase subunit I (213 aa).

4Fe-4S ferredoxin-type domains follow at residues 74–103 and 113–142; these read RFIE…METS and GNYS…HGIE. [4Fe-4S] cluster contacts are provided by Cys83, Cys86, Cys89, Cys93, Cys122, Cys125, Cys128, and Cys132.

It belongs to the complex I 23 kDa subunit family. In terms of assembly, NDH-1 is composed of 14 different subunits. Subunits NuoA, H, J, K, L, M, N constitute the membrane sector of the complex. Requires [4Fe-4S] cluster as cofactor.

Its subcellular location is the cell inner membrane. The catalysed reaction is a quinone + NADH + 5 H(+)(in) = a quinol + NAD(+) + 4 H(+)(out). Functionally, NDH-1 shuttles electrons from NADH, via FMN and iron-sulfur (Fe-S) centers, to quinones in the respiratory chain. The immediate electron acceptor for the enzyme in this species is believed to be ubiquinone. Couples the redox reaction to proton translocation (for every two electrons transferred, four hydrogen ions are translocated across the cytoplasmic membrane), and thus conserves the redox energy in a proton gradient. This is NADH-quinone oxidoreductase subunit I from Campylobacter jejuni subsp. doylei (strain ATCC BAA-1458 / RM4099 / 269.97).